A 299-amino-acid chain; its full sequence is Riboflavin transporter ImpX (299 aa).

EamA domains lie at 6–144 (KGAL…YLLT) and 162–294 (SLYS…SIIK). Helical transmembrane passes span 7–27 (GALL…ALTP), 34–54 (VPFV…ILFG), 68–88 (DLFF…LCIV), 101–121 (VVTL…RLLL), 129–149 (YLFW…EFHL), 158–178 (LLPA…ATVF), 202–222 (IMFV…ATAG), 224–244 (WLIF…LYYF), 253–273 (VATM…YLIN), and 276–296 (VLSP…IKIS).

The protein belongs to the EamA transporter family.

Its subcellular location is the cell membrane. In terms of biological role, transports riboflavin into the cell. In Fusobacterium nucleatum subsp. nucleatum (strain ATCC 23726 / VPI 4351), this protein is Riboflavin transporter ImpX.